A 146-amino-acid chain; its full sequence is Bifunctional adenosine 5'-phosphosulfate phosphorylase/adenylylsulfatase HINT4 (146 aa).

One can recognise an HIT domain in the interval 9–120 (IFCEIVRNPT…YVPRWKAIKY (112 aa)). The Histidine triad motif signature appears at 101-105 (HLHLH). Histidine 105 acts as the Tele-AMP-histidine intermediate in catalysis.

As to quaternary structure, homodimer.

Its subcellular location is the peroxisome. The enzyme catalyses sulfate + ADP + H(+) = adenosine 5'-phosphosulfate + phosphate. It catalyses the reaction adenosine 5'-phosphosulfate + H2O = sulfate + AMP + 2 H(+). Its activity is regulated as follows. The adenosine 5'-phosphosulfate phosphorylase activity is enhanced at low pH. In terms of biological role, possesses adenylylsulfatase activity in vitro, releasing AMP and sulfate from adenylyl sulfate. Also possesses adenosine 5'-phosphosulfate (APS) phosphorylase activity in vitro. Catalyzes the phosphorolysis of APS, leading to ADP and sulfate. In Arabidopsis thaliana (Mouse-ear cress), this protein is Bifunctional adenosine 5'-phosphosulfate phosphorylase/adenylylsulfatase HINT4.